We begin with the raw amino-acid sequence, 423 residues long: Imidazolonepropionase (423 aa).

Fe(3+) contacts are provided by His-78 and His-80. 2 residues coordinate Zn(2+): His-78 and His-80. The 4-imidazolone-5-propanoate site is built by Arg-87, Tyr-150, and His-183. Tyr-150 lines the N-formimidoyl-L-glutamate pocket. His-247 serves as a coordination point for Fe(3+). A Zn(2+)-binding site is contributed by His-247. 4-imidazolone-5-propanoate is bound at residue Glu-250. Fe(3+) is bound at residue Asp-322. Residue Asp-322 participates in Zn(2+) binding. N-formimidoyl-L-glutamate-binding residues include Asn-324 and Gly-326. Residue Ser-327 coordinates 4-imidazolone-5-propanoate.

Belongs to the metallo-dependent hydrolases superfamily. HutI family. The cofactor is Zn(2+). It depends on Fe(3+) as a cofactor.

The protein localises to the cytoplasm. The catalysed reaction is 4-imidazolone-5-propanoate + H2O = N-formimidoyl-L-glutamate. It participates in amino-acid degradation; L-histidine degradation into L-glutamate; N-formimidoyl-L-glutamate from L-histidine: step 3/3. Catalyzes the hydrolytic cleavage of the carbon-nitrogen bond in imidazolone-5-propanoate to yield N-formimidoyl-L-glutamate. It is the third step in the universal histidine degradation pathway. In Bacillus cereus (strain ZK / E33L), this protein is Imidazolonepropionase.